The primary structure comprises 322 residues: Mas-related G-protein coupled receptor member X3 (322 aa).

The Extracellular segment spans residues 1–31; that stretch reads MDPTIPALGTSQTPINRREETPCYKQTLSLT. A helical transmembrane segment spans residues 32 to 52; the sequence is VLTCIISLVGLTGNAVVLWLL. Topologically, residues 53–60 are cytoplasmic; sequence GFRMRRNA. Residues 61-81 form a helical membrane-spanning segment; that stretch reads VSTYILNLAAVDFLFLSGHIV. Residues 82 to 96 are Extracellular-facing; sequence RSPLRLISIRHPISK. The chain crosses the membrane as a helical span at residues 97–117; it reads IVNPVMTFPYFIGLSMLSAIS. Topologically, residues 118–139 are cytoplasmic; it reads TERCLSVLWPMWYRCRRPRHLS. Residues 140–160 traverse the membrane as a helical segment; the sequence is VVVCVLLWALSLLRSILEWMF. At 161–177 the chain is on the extracellular side; sequence CDFLFSGADSVWCETSD. A helical membrane pass occupies residues 178 to 198; the sequence is FITIAWLIFLCVVLCGSSLVL. Residues 199 to 213 are Cytoplasmic-facing; sequence LVRILCGSRKMPLTR. The helical transmembrane segment at 214–234 threads the bilayer; sequence LYVTILLTVLVFLLCGLPFGI. At 235–254 the chain is on the extracellular side; that stretch reads QWALFSRIHLDWKVLFCHVH. A helical transmembrane segment spans residues 255 to 275; sequence LISVFLSSLNSSANPIIYFFV. At 276-322 the chain is on the cytoplasmic side; the sequence is GSFRQRQNRQNLKLVLQRALQDTPEVDEGGGRLPEETLELSVSRLEQ.

The protein belongs to the G-protein coupled receptor 1 family. Mas subfamily.

The protein resides in the cell membrane. In terms of biological role, orphan receptor. Probably involved in the function of nociceptive neurons. May regulate nociceptor function and/or development, including the sensation or modulation of pain. Potently activated by enkephalins. This is Mas-related G-protein coupled receptor member X3 (MRGPRX3) from Macaca mulatta (Rhesus macaque).